The chain runs to 182 residues: SAGA-associated factor 11 homolog (182 aa).

The disordered stretch occupies residues 61-84 (GSGAAVEGEPEDSKPYTIVDQPDT). Residues 98 to 119 (CHCPNCNRIVAASRFAPHLEKC) form an SGF11-type zinc finger. Residues 133-182 (RIANTRDVGTGNYFGGDEDDEDDADWSGEKRKKKISQVRTNGSKKNGKTS) are disordered. The span at 148-158 (GDEDDEDDADW) shows a compositional bias: acidic residues.

It belongs to the SGF11 family. In terms of assembly, component of some SAGA transcription coactivator-HAT complexes. Within the SAGA complex, participates in a subcomplex of SAGA called the DUB module (deubiquitination module).

It is found in the nucleus. Its function is as follows. Component of the transcription regulatory histone acetylation (HAT) complex SAGA, a multiprotein complex that activates transcription by remodeling chromatin and mediating histone acetylation and deubiquitination. Within the SAGA complex, participates in a subcomplex that specifically deubiquitinates histone H2B. The SAGA complex is recruited to specific gene promoters by activators, where it is required for transcription. This Anopheles gambiae (African malaria mosquito) protein is SAGA-associated factor 11 homolog.